The primary structure comprises 497 residues: Lysine--tRNA ligase (497 aa).

Glu406 and Glu413 together coordinate Mg(2+).

This sequence belongs to the class-II aminoacyl-tRNA synthetase family. Homodimer. The cofactor is Mg(2+).

It localises to the cytoplasm. The catalysed reaction is tRNA(Lys) + L-lysine + ATP = L-lysyl-tRNA(Lys) + AMP + diphosphate. This Rhizobium leguminosarum bv. trifolii (strain WSM2304) protein is Lysine--tRNA ligase.